Consider the following 226-residue polypeptide: Histone H1.5 (226 aa).

Over residues 1 to 16 (MSETAPAETATPAPVE) the composition is skewed to low complexity. Positions 1-44 (MSETAPAETATPAPVEKSPAKKKATKKAAGAGAAKRKATGPPVS) are disordered. Position 2 is an N-acetylserine; partial (Ser-2). Ser-2 is modified (phosphoserine). Thr-11 is subject to Phosphothreonine; by GSK3. Lys-17 is modified (N6-acetyllysine). Ser-18 carries the post-translational modification Phosphoserine. Residue Lys-27 is modified to N6-methyllysine. Lys-37 carries the post-translational modification N6-(beta-hydroxybutyryl)lysine; alternate. Lys-37 carries the N6-succinyllysine; alternate modification. At Thr-39 the chain carries Phosphothreonine. The region spanning 39-112 (TGPPVSELIT…GASGSFKLNK (74 aa)) is the H15 domain. Residue Lys-49 is modified to N6-acetyllysine. An N6-(beta-hydroxybutyryl)lysine modification is found at Lys-55. A Citrulline modification is found at Arg-57. Lys-67 carries the N6-(beta-hydroxybutyryl)lysine modification. Lys-78 is modified (N6-acetyllysine). 3 positions are modified to N6-(beta-hydroxybutyryl)lysine: Lys-88, Lys-93, and Lys-109. The interval 98–226 (QTKGTGASGS…KAKKAAAKKK (129 aa)) is disordered. The segment covering 122–133 (KAKKAGAAKAKK) has biased composition (basic residues). 2 positions are modified to phosphothreonine: Thr-138 and Thr-155. The span at 140–161 (KKAKKAAGAKKAVKKTPKKAKK) shows a compositional bias: basic residues. Lys-168 is modified (N6-acetyllysine). Residues 169–187 (KVAKSPKKAKAAAKPKKAT) show a composition bias toward basic residues. 2 positions are modified to phosphoserine: Ser-173 and Ser-189. Basic residues predominate over residues 194 to 226 (KAVKPKAAKPKAAKPKAAKPKAAKAKKAAAKKK).

The protein belongs to the histone H1/H5 family. As to quaternary structure, interacts with MSX1. In terms of processing, H1 histones are progressively phosphorylated during the cell cycle, becoming maximally phosphorylated during late G2 phase and M phase, and being dephosphorylated sharply thereafter. Phosphorylated at Thr-11 by GSK3B during mitosis in prometaphase and dephosphorylated in telophase. Citrullination at Arg-57 (H1R54ci) by PADI4 takes place within the DNA-binding site of H1 and results in its displacement from chromatin and global chromatin decondensation, thereby promoting pluripotency and stem cell maintenance. Ubiquitous. Expressed in the majority of the cell lines tested and in testis.

It is found in the nucleus. The protein resides in the chromosome. Its function is as follows. Histone H1 protein binds to linker DNA between nucleosomes forming the macromolecular structure known as the chromatin fiber. Histones H1 are necessary for the condensation of nucleosome chains into higher-order structured fibers. Also acts as a regulator of individual gene transcription through chromatin remodeling, nucleosome spacing and DNA methylation. The protein is Histone H1.5 of Homo sapiens (Human).